We begin with the raw amino-acid sequence, 259 residues long: MIFPNINPVIFSIGPFAISWYSLSYVIGILLGWFYANKIIEKFKPQITKKNLEDFITYAVIGIIVGGRLGFVLLYNPSRYFSNPIDILKTYQGGMSFHGGALGVIIAAYLFCRKYKVNFLSLTDIIATVVPIGLFLGRIANFINGELYGRITNSSFGIIFPNSDLSPRHPSQLYEAFFEGLVLFCILAYATFKHKTLEKRALNLGLFLTFYALFRITIEIFREPDMQIGFILDSLTMGQILSIPMLILGSSLICQSTLK.

4 helical membrane-spanning segments follow: residues 16 to 36, 55 to 75, 92 to 112, and 117 to 137; these read FAIS…WFYA, FITY…VLLY, QGGM…YLFC, and VNFL…LFLG. Arg138 contacts a 1,2-diacyl-sn-glycero-3-phospho-(1'-sn-glycerol). 3 helical membrane passes run 172–192, 201–221, and 228–248; these read QLYE…YATF, ALNL…IEIF, and IGFI…MLIL.

This sequence belongs to the Lgt family.

It is found in the cell inner membrane. The enzyme catalyses L-cysteinyl-[prolipoprotein] + a 1,2-diacyl-sn-glycero-3-phospho-(1'-sn-glycerol) = an S-1,2-diacyl-sn-glyceryl-L-cysteinyl-[prolipoprotein] + sn-glycerol 1-phosphate + H(+). It functions in the pathway protein modification; lipoprotein biosynthesis (diacylglyceryl transfer). In terms of biological role, catalyzes the transfer of the diacylglyceryl group from phosphatidylglycerol to the sulfhydryl group of the N-terminal cysteine of a prolipoprotein, the first step in the formation of mature lipoproteins. This is Phosphatidylglycerol--prolipoprotein diacylglyceryl transferase from Rickettsia canadensis (strain McKiel).